Reading from the N-terminus, the 569-residue chain is 5'-AMP-activated protein kinase subunit gamma-2 (569 aa).

The interval 1–222 (MGSAVMDTKK…TRPPLASPTH (222 aa)) is disordered. Phosphoserine occurs at positions 65, 71, 73, 90, 138, 143, 161, and 162. The span at 156 to 167 (TSGLSSSPSTPT) shows a compositional bias: low complexity. Threonine 165 carries the phosphothreonine modification. A compositionally biased stretch (basic and acidic residues) spans 179 to 189 (SYKHEPERLEN). Polar residues predominate over residues 192 to 212 (YASSSPPDTGQRFCPSSFQSP). Position 196 is a phosphoserine (serine 196). CBS domains follow at residues 275-335 (PTSS…KSPM), 357-415 (TFKP…MSDM), and 430-492 (IGTY…NLDI). ADP contacts are provided by residues arginine 302, 317-322 (MLTITD), valine 362, 383-384 (HR), and lysine 402. Residues arginine 302, 317-322 (MLTITD), valine 362, histidine 383, 383-384 (HR), lysine 402, threonine 432, alanine 437, 458-459 (SA), 474-477 (SKFD), arginine 501, histidine 530, 530-531 (HR), and 546-549 (SLSD) contribute to the AMP site. ATP is bound by residues arginine 302, 317–322 (MLTITD), valine 362, 383–384 (HR), arginine 384, and lysine 402. The AMPK pseudosubstrate motif lies at 370 to 391 (LFDAVYSLIKNKIHRLPVIDPI). ADP-binding positions include 474 to 477 (SKFD), arginine 501, and 530 to 531 (HR). ATP-binding positions include 474 to 477 (SKFD), arginine 501, and 530 to 531 (HR). The 59-residue stretch at 504–562 (YFEGVVKCNKLEILETIVDRIVRAEVHRLVVVNEADSIVGIISLSDILQALILTPAGAK) folds into the CBS 4 domain.

Belongs to the 5'-AMP-activated protein kinase gamma subunit family. As to quaternary structure, AMPK is a heterotrimer of an alpha catalytic subunit (PRKAA1 or PRKAA2), a beta (PRKAB1 or PRKAB2) and a gamma non-catalytic subunits (PRKAG1, PRKAG2 or PRKAG3). Interacts with FNIP1 and FNIP2. In terms of processing, phosphorylated by ULK1; leading to negatively regulate AMPK activity and suggesting the existence of a regulatory feedback loop between ULK1 and AMPK. Post-translationally, glycosylated; O-GlcNAcylated by OGT, promoting the AMP-activated protein kinase (AMPK) activity. Isoform B is ubiquitously expressed except in liver and thymus. The highest level is detected in heart with abundant expression in placenta and testis.

AMP/ATP-binding subunit of AMP-activated protein kinase (AMPK), an energy sensor protein kinase that plays a key role in regulating cellular energy metabolism. In response to reduction of intracellular ATP levels, AMPK activates energy-producing pathways and inhibits energy-consuming processes: inhibits protein, carbohydrate and lipid biosynthesis, as well as cell growth and proliferation. AMPK acts via direct phosphorylation of metabolic enzymes, and by longer-term effects via phosphorylation of transcription regulators. Also acts as a regulator of cellular polarity by remodeling the actin cytoskeleton; probably by indirectly activating myosin. Gamma non-catalytic subunit mediates binding to AMP, ADP and ATP, leading to activate or inhibit AMPK: AMP-binding results in allosteric activation of alpha catalytic subunit (PRKAA1 or PRKAA2) both by inducing phosphorylation and preventing dephosphorylation of catalytic subunits. ADP also stimulates phosphorylation, without stimulating already phosphorylated catalytic subunit. ATP promotes dephosphorylation of catalytic subunit, rendering the AMPK enzyme inactive. In Homo sapiens (Human), this protein is 5'-AMP-activated protein kinase subunit gamma-2 (PRKAG2).